Consider the following 733-residue polypeptide: Forkhead box protein K1 (733 aa).

Alanine 2 is subject to N-acetylalanine. Residues alanine 2–proline 40 are interaction with SIN3A and SIN3B. Residues alanine 36 to glycine 79 are disordered. Pro residues predominate over residues alanine 37–proline 62. The required for interaction with FOXO4 and MEF2C stretch occupies residues alanine 95 to serine 420. A Phosphoserine modification is found at serine 101. One can recognise an FHA domain in the interval valine 123–glutamine 175. Residues arginine 161 and arginine 191 each carry the omega-N-methylarginine modification. 4 positions are modified to phosphoserine: serine 213, serine 223, serine 239, and serine 243. Phosphothreonine is present on residues threonine 245 and threonine 247. Phosphoserine is present on residues serine 253, serine 257, serine 295, and serine 299. 2 disordered regions span residues alanine 287 to proline 306 and serine 413 to threonine 436. Residues lysine 305–arginine 400 constitute a DNA-binding region (fork-head). Phosphoserine is present on residues serine 416 and serine 420. A Phosphothreonine modification is found at threonine 422. A Phosphoserine modification is found at serine 428. At threonine 436 the chain carries Phosphothreonine. A phosphoserine mark is found at serine 441, serine 445, and serine 459. Positions valine 676 to threonine 697 are enriched in low complexity. The disordered stretch occupies residues valine 676–glutamate 733. A compositionally biased stretch (basic and acidic residues) spans proline 700 to glutamate 709.

In terms of assembly, interacts with SIN3A and SIN3B (via PAH2) to form a complex which represses transcription. Component of SIN3A-, but not SIN3B-, containing multiprotein complexes. Interacts with FOXO4 and MEF2C; both interactions inhibit FOXO4 and MEF2C transactivation activity. Interacts (when phosphorylated) with YWHAE/14-3-3-epsilon; promotes sequestration in the cytoplasm and leads to impaired ability to bind DNA. Interacts with FHL2. Interacts with SRF. Interacts with DVL2 and DVL3; the interaction induces DVL2 nuclear translocation. Interacts with BAP1 (when phosphorylated). Accessory component of the polycomb repressive deubiquitinase (PR-DUB) complex, at least composed of BAP1, one of ASXL1, ASXL2 or (probably) ASXL3 and one of MBD5 or MBD6. The PR-DUB core associates with a number of accessory proteins, including FOXK1, FOXK2, KDM1B, HCFC1 and OGT. Phosphorylation by GSK3 (GSK3A or GSK3B) promotes interaction with YWHAE/14-3-3-epsilon and retention in the cytoplasm. In response to mTORC1 signaling, phosphorylation by GSK3 is prevented, leading to translocation to the nucleus. In terms of tissue distribution, expressed both developing and adult tissues. In adults, significant expression is seen in tumors of the brain, colon and lymph node.

It localises to the nucleus. The protein localises to the cytoplasm. Transcriptional regulator involved in different processes such as glucose metabolism, aerobic glycolysis, muscle cell differentiation and autophagy. Recognizes and binds the forkhead DNA sequence motif (5'-GTAAACA-3') and can both act as a transcription activator or repressor, depending on the context. Together with FOXK2, acts as a key regulator of metabolic reprogramming towards aerobic glycolysis, a process in which glucose is converted to lactate in the presence of oxygen. Acts by promoting expression of enzymes for glycolysis (such as hexokinase-2 (HK2), phosphofructokinase, pyruvate kinase (PKLR) and lactate dehydrogenase), while suppressing further oxidation of pyruvate in the mitochondria by up-regulating pyruvate dehydrogenase kinases PDK1 and PDK4. Probably plays a role in gluconeogenesis during overnight fasting, when lactate from white adipose tissue and muscle is the main substrate. Involved in mTORC1-mediated metabolic reprogramming: in response to mTORC1 signaling, translocates into the nucleus and regulates the expression of genes associated with glycolysis and downstream anabolic pathways, such as HIF1A, thereby regulating glucose metabolism. Together with FOXK2, acts as a negative regulator of autophagy in skeletal muscle: in response to starvation, enters the nucleus, binds the promoters of autophagy genes and represses their expression, preventing proteolysis of skeletal muscle proteins. Acts as a transcriptional regulator of the myogenic progenitor cell population in skeletal muscle. Binds to the upstream enhancer region (CCAC box) of myoglobin (MB) gene, regulating the myogenic progenitor cell population. Promotes muscle progenitor cell proliferation by repressing the transcriptional activity of FOXO4, thereby inhibiting myogenic differentiation. Involved in remodeling processes of adult muscles that occur in response to physiological stimuli. Required to correct temporal orchestration of molecular and cellular events necessary for muscle repair. Represses myogenic differentiation by inhibiting MEFC activity. Positively regulates Wnt/beta-catenin signaling by translocating DVL into the nucleus. Reduces virus replication, probably by binding the interferon stimulated response element (ISRE) to promote antiviral gene expression. Accessory component of the polycomb repressive deubiquitinase (PR-DUB) complex; recruits the PR-DUB complex to specific FOXK1-bound genes. This chain is Forkhead box protein K1, found in Homo sapiens (Human).